The sequence spans 364 residues: Fructose-bisphosphate aldolase, non-muscle type (364 aa).

R56 and K147 together coordinate substrate. K230 acts as the Schiff-base intermediate with dihydroxyacetone-P in catalysis.

Belongs to the class I fructose-bisphosphate aldolase family. In terms of assembly, homotetramer. Expressed mainly in the liver and also in brain and other tissues, except for the heart muscle.

It carries out the reaction beta-D-fructose 1,6-bisphosphate = D-glyceraldehyde 3-phosphate + dihydroxyacetone phosphate. It functions in the pathway carbohydrate degradation; glycolysis; D-glyceraldehyde 3-phosphate and glycerone phosphate from D-glucose: step 4/4. This Lethenteron camtschaticum (Japanese lamprey) protein is Fructose-bisphosphate aldolase, non-muscle type.